A 797-amino-acid polypeptide reads, in one-letter code: Ubiquitin carboxyl-terminal hydrolase 14 (797 aa).

The segment at 156–266 (LISEHALTLQ…EHLAHFGIDF (111 aa)) adopts a UBP-type; degenerate zinc-finger fold. Positions 180, 183, 200, and 213 each coordinate Zn(2+). In terms of domain architecture, USP spans 308-796 (TGLVNLGNSC…MGYVYFFQRL (489 aa)). C317 serves as the catalytic Nucleophile. 2 UBA domains span residues 613–654 (VANE…LLSH) and 670–710 (DIDQ…VFNN). Residue H758 is the Proton acceptor of the active site.

This sequence belongs to the peptidase C19 family. Constitutively and ubiquitously expressed (at protein level).

It carries out the reaction Thiol-dependent hydrolysis of ester, thioester, amide, peptide and isopeptide bonds formed by the C-terminal Gly of ubiquitin (a 76-residue protein attached to proteins as an intracellular targeting signal).. In terms of biological role, recognizes and hydrolyzes the peptide bond at the C-terminal Gly of ubiquitin. Involved in the processing of poly-ubiquitin precursors as well as that of ubiquitinated proteins. Involved in seed and embryo development. The protein is Ubiquitin carboxyl-terminal hydrolase 14 (UBP14) of Arabidopsis thaliana (Mouse-ear cress).